A 251-amino-acid chain; its full sequence is 5-oxoprolinase subunit A 2 (251 aa).

It belongs to the LamB/PxpA family. As to quaternary structure, forms a complex composed of PxpA, PxpB and PxpC.

The enzyme catalyses 5-oxo-L-proline + ATP + 2 H2O = L-glutamate + ADP + phosphate + H(+). Functionally, catalyzes the cleavage of 5-oxoproline to form L-glutamate coupled to the hydrolysis of ATP to ADP and inorganic phosphate. This Pseudomonas syringae pv. tomato (strain ATCC BAA-871 / DC3000) protein is 5-oxoprolinase subunit A 2.